A 743-amino-acid polypeptide reads, in one-letter code: Dolichyl-phosphooligosaccharide-protein glycotransferase 2 (743 aa).

Topologically, residues 1-7 (MKIDKRL) are cytoplasmic. The helical transmembrane segment at 8-28 (MVIVAIATLFRMIPFRLKYLV) threads the bilayer. The DXD motif 1 signature appears at 29–31 (GSD). Topologically, residues 29 to 91 (GSDPYFHLAY…FSFLGISLYT (63 aa)) are extracellular. Asp-31 is a binding site for Mn(2+). The helical transmembrane segment at 92-112 (AFRVTPVIFGVLTVVFFYLSL) threads the bilayer. The Cytoplasmic segment spans residues 113–119 (KKLYNRD). Residues 120 to 140 (VAFIVGLFLGVNYGHIFRSMA) form a helical membrane-spanning segment. Residues 141–144 (NYYR) are Extracellular-facing. 2 residues coordinate Mn(2+): Arg-144 and Asp-146. A DXD motif 2 motif is present at residues 144–146 (RGD). The chain crosses the membrane as a helical span at residues 145 to 165 (GDNYMLFWYSVALLGIALGLK). Residues 166-170 (TRSKY) are Cytoplasmic-facing. A run of 2 helical transmembrane segments spans residues 171–191 (RYLFYLLPGIATGFASAFWQA) and 192–212 (YYPIFVFVLAGGLLLGVYAYL). Residues 213–216 (KSPK) lie on the Cytoplasmic side of the membrane. Residues 217–237 (LFLDSILIVLSTGLGVLIANI) form a helical membrane-spanning segment. At 238-272 (LGDKVGYGMLGYTDWMGKKVAETFGLEFGFIKDAY) the chain is on the extracellular side. The helical transmembrane segment at 273–293 (LLIHVKYLLPLSLVFLGFLII) threads the bilayer. Topologically, residues 294 to 302 (TKKLNPKIK) are cytoplasmic. A helical membrane pass occupies residues 303-323 (VGVLVGGSILAFIVMLVKFPA). The Extracellular segment spans residues 324–345 (LKDLSTGFGTFREVPISETLPP). The short motif at 333 to 336 (TFRE) is the TIXE motif element. A helical membrane pass occupies residues 346-366 (TLDDLWRAYNIAIFLAALYIL). Residues 367-373 (RLRKIRS) lie on the Cytoplasmic side of the membrane. The chain crosses the membrane as a helical span at residues 374 to 391 (GDAILLGYVITSLWMLRY). Residues 392 to 394 (WTR) lie on the Extracellular side of the membrane. Arg-394 contributes to the a glycophospholipid binding site. The chain crosses the membrane as a helical span at residues 395-415 (FLFTAAPAVAFLSGIGVYELT). Residues 416 to 424 (RRIKENKIR) lie on the Cytoplasmic side of the membrane. Residues 425–445 (ITSLGVVILLSSAFSLGEVYS) traverse the membrane as a helical segment. Residues 446–743 (VKPFMNENWE…LDRGIVRVKN (298 aa)) are Extracellular-facing. Residues 474-476 (WWD) form an interacts with target acceptor peptide in protein substrate region. The WWDYG motif motif lies at 474-478 (WWDWG). Positions 526-533 (DILKFEAI) match the DK motif motif.

It belongs to the STT3 family. It depends on Mn(2+) as a cofactor. The cofactor is Mg(2+).

The protein localises to the cell membrane. It catalyses the reaction an archaeal dolichyl phosphooligosaccharide + [protein]-L-asparagine = an archaeal dolichyl phosphate + a glycoprotein with the oligosaccharide chain attached by N-beta-D-glycosyl linkage to a protein L-asparagine.. It participates in protein modification; protein glycosylation. In terms of biological role, oligosaccharyl transferase (OST) that catalyzes the initial transfer of a defined glycan (ManNAcXyl(2)GlcAMan(2)GalNAc in P.furiosus) from the lipid carrier dolichol-monophosphate to an asparagine residue within an Asn-X-Ser/Thr consensus motif in nascent polypeptide chains, the first step in protein N-glycosylation. The chain is Dolichyl-phosphooligosaccharide-protein glycotransferase 2 (aglB2) from Pyrococcus furiosus (strain ATCC 43587 / DSM 3638 / JCM 8422 / Vc1).